Here is a 487-residue protein sequence, read N- to C-terminus: MGLQLALLLAGIVALSDSARGPPRIADKVIHRQSVRLGRTIKLLCPVEGDPPPLTMWMKDGRTIHSGWTRFRILQQGLKIKEVESEDAGTYICKATNGFGSTNVNYTLIVIDDTSSGKNSQTPEGSNGEYEDHSGKQWAQPRFTQPAKMRRRVIARPVGSSIRLKCVASGNPRPDITWLKDNKPLMPHEIGENKKKKWTLNLKNLKPEDSGKYTCRVFNKVGEINATYKVEVIQRTRSKPILTGTHPVNTTVDYGGTTSFQCKVRSDVKPVIQWLKRVEYGTESKYNSTIDVGGQKFVVLPTGEVWSRPDGSYLNKLMITRAKEEDAGMYICLGANTMGYSFRSAFLTVLPDPKPPSAPVPPSSVSSLPWPVIIGIPAGAVFIFGTILLWLCQTKKKPCSPPAAAPVHRPQPRDRICVSQVPDKDCISSINYEEYVAQQQHLLSQGPALAPAMASKMYPKIYTDIHTHTHSHVEGKVHQHQHIQYQC.

Residues 1 to 18 (MGLQLALLLAGIVALSDS) form the signal peptide. The Extracellular segment spans residues 19–371 (ARGPPRIADK…PSSVSSLPWP (353 aa)). The 87-residue stretch at 23–109 (PRIADKVIHR…GSTNVNYTLI (87 aa)) folds into the Ig-like C2-type 1 domain. Cysteines 45 and 93 form a disulfide. A glycan (N-linked (GlcNAc...) asparagine) is linked at asparagine 105. Polar residues predominate over residues 115–125 (SSGKNSQTPEG). The tract at residues 115 to 147 (SSGKNSQTPEGSNGEYEDHSGKQWAQPRFTQPA) is disordered. Ig-like C2-type domains lie at 141 to 231 (PRFT…YKVE) and 240 to 348 (PILT…AFLT). An intrachain disulfide couples cysteine 166 to cysteine 215. 3 N-linked (GlcNAc...) asparagine glycosylation sites follow: asparagine 225, asparagine 249, and asparagine 287. A disulfide bond links cysteine 262 and cysteine 332. The chain crosses the membrane as a helical span at residues 372-392 (VIIGIPAGAVFIFGTILLWLC). Topologically, residues 393–487 (QTKKKPCSPP…HQHQHIQYQC (95 aa)) are cytoplasmic.

In terms of assembly, interacts with heparin and FGF2. In terms of tissue distribution, expressed in cartilaginous structures.

The protein resides in the cell membrane. Functionally, has a negative effect on cell proliferation. This chain is Fibroblast growth factor receptor-like 1 (FGFRL1), found in Gallus gallus (Chicken).